We begin with the raw amino-acid sequence, 185 residues long: Dual-action ribosomal maturation protein DarP (185 aa).

This sequence belongs to the DarP family.

Its subcellular location is the cytoplasm. Its function is as follows. Member of a network of 50S ribosomal subunit biogenesis factors which assembles along the 30S-50S interface, preventing incorrect 23S rRNA structures from forming. Promotes peptidyl transferase center (PTC) maturation. The protein is Dual-action ribosomal maturation protein DarP of Vibrio vulnificus (strain YJ016).